We begin with the raw amino-acid sequence, 105 residues long: Thioredoxin (105 aa).

One can recognise a Thioredoxin domain in the interval 1–105 (VQVISSYDQF…LQAAITQHSA (105 aa)). Catalysis depends on nucleophile residues Cys29 and Cys32. Cys29 and Cys32 are disulfide-bonded.

Belongs to the thioredoxin family. In terms of assembly, monomer.

Functionally, participates in various redox reactions through the reversible oxidation of its active center dithiol to a disulfide and catalyzes dithiol-disulfide exchange reactions. The polypeptide is Thioredoxin (Malassezia sympodialis (Atopic eczema-associated yeast)).